The chain runs to 686 residues: MATDPRKILVTCALPYANGSIHLGHMLEHIQADIWVRYQRLRGNDVNFICADDAHGTPIMLKAQQMGISPEEMIAAVSEEHQKDFAGFDISFDNYHSTHSDENRELASHIYLELKKNGFITSRTISQLFDPEKEMFLPDRFVKGTCPKCKAEDQYGDNCDNCGETYSPTDLINPKSAVSGATPVMKDSEHFFFDLPQFESMLKEWTRSGSLQSETANKMQEWFESGLQQWDISRDAPYFGFEIPGETNKFFYVWLDAPIGYMGSFKNLCNKRDDLNFDEYWKKDSTTELYHFIGKDIVYFHSLFWPAMLDGAGFRKPNNVFVHGYVTVNGAKMSKSKGTFIKAGTYLNHLDPECLRYYYAAKLNSRIDDLDLNLEDFTQRVNSDVVNKIVNLASRNAGFITKRFDGKLADNFVEPELYNEFIAAADRIAELYETREFGRAIREITALADKANQYIDEKAPWVLAKEEGKEQELQEVSSVGINLFRVLMAYLKPVMPELAARTEAFLNETLTWEGVAQPLVAHEITKFKALFARIDPKKVEAMIEESKEDAAIEMAAKEKAEAEKEKASQTELDKDPIADEIEFDAFEAVDMRIARIISCEEVPKANKLLKFQLDIGGETRQVFSGIKSAYKPEELEGKLTVMVANLKPRKMKFGMSEGMILAAGPGGKELWILEPHEGAQPGMRVM.

Residues 15–25 (PYANGSIHLGH) carry the 'HIGH' region motif. Zn(2+)-binding residues include Cys146, Cys149, Cys159, and Cys162. The 'KMSKS' region motif lies at 332 to 336 (KMSKS). Lys335 contributes to the ATP binding site. The region spanning 585-686 (AFEAVDMRIA…EGAQPGMRVM (102 aa)) is the tRNA-binding domain.

It belongs to the class-I aminoacyl-tRNA synthetase family. MetG type 1 subfamily. As to quaternary structure, homodimer. The cofactor is Zn(2+).

It localises to the cytoplasm. The catalysed reaction is tRNA(Met) + L-methionine + ATP = L-methionyl-tRNA(Met) + AMP + diphosphate. Functionally, is required not only for elongation of protein synthesis but also for the initiation of all mRNA translation through initiator tRNA(fMet) aminoacylation. This is Methionine--tRNA ligase from Aliivibrio fischeri (strain ATCC 700601 / ES114) (Vibrio fischeri).